Reading from the N-terminus, the 403-residue chain is Tyrosine--tRNA ligase (403 aa).

A 'HIGH' region motif is present at residues 42–51 (PTAPDLHLGH). The 'KMSKS' region signature appears at 226-230 (KMSKS). Lys229 is an ATP binding site. The S4 RNA-binding domain maps to 339–400 (LRIASLLTAA…GKRNFARVAL (62 aa)).

This sequence belongs to the class-I aminoacyl-tRNA synthetase family. TyrS type 2 subfamily. Homodimer.

It localises to the cytoplasm. The catalysed reaction is tRNA(Tyr) + L-tyrosine + ATP = L-tyrosyl-tRNA(Tyr) + AMP + diphosphate + H(+). In terms of biological role, catalyzes the attachment of tyrosine to tRNA(Tyr) in a two-step reaction: tyrosine is first activated by ATP to form Tyr-AMP and then transferred to the acceptor end of tRNA(Tyr). The protein is Tyrosine--tRNA ligase of Xanthomonas campestris pv. campestris (strain ATCC 33913 / DSM 3586 / NCPPB 528 / LMG 568 / P 25).